Here is a 246-residue protein sequence, read N- to C-terminus: Small ribosomal subunit protein uS2 (246 aa).

It belongs to the universal ribosomal protein uS2 family.

In Burkholderia vietnamiensis (strain G4 / LMG 22486) (Burkholderia cepacia (strain R1808)), this protein is Small ribosomal subunit protein uS2.